A 279-amino-acid chain; its full sequence is Putative E3 ubiquitin-protein ligase C36B7.05c (279 aa).

The FYVE-type zinc-finger motif lies at 27-122 (DDESAQCNNC…VCVNCRQQLS (96 aa)). Residues Cys-33, Cys-36, Cys-49, Cys-52, Cys-57, Cys-60, Cys-114, and Cys-117 each contribute to the Zn(2+) site. Position 200 is a phosphoserine (Ser-200). Residues 230-273 (CIICFEEFAAGDRVARIEYCLCIFHLKCYRDWLSTGAAGCPVHA) form an RING-type; atypical zinc finger.

The protein localises to the cytoplasm. It localises to the nucleus. It is found in the endosome membrane. The protein resides in the vacuole membrane. The enzyme catalyses S-ubiquitinyl-[E2 ubiquitin-conjugating enzyme]-L-cysteine + [acceptor protein]-L-lysine = [E2 ubiquitin-conjugating enzyme]-L-cysteine + N(6)-ubiquitinyl-[acceptor protein]-L-lysine.. It functions in the pathway protein modification; protein ubiquitination. In terms of biological role, functions as an E3 ubiquitin-protein ligase. Binds phospholipid vesicles containing phosphatidylinositol 3-phosphate. The chain is Putative E3 ubiquitin-protein ligase C36B7.05c from Schizosaccharomyces pombe (strain 972 / ATCC 24843) (Fission yeast).